A 194-amino-acid polypeptide reads, in one-letter code: Peptidyl-tRNA hydrolase (194 aa).

Position 17 (Tyr-17) interacts with tRNA. His-22 acts as the Proton acceptor in catalysis. The tRNA site is built by Phe-68, Asn-70, and Asn-116.

It belongs to the PTH family. As to quaternary structure, monomer.

The protein localises to the cytoplasm. The catalysed reaction is an N-acyl-L-alpha-aminoacyl-tRNA + H2O = an N-acyl-L-amino acid + a tRNA + H(+). Its function is as follows. Hydrolyzes ribosome-free peptidyl-tRNAs (with 1 or more amino acids incorporated), which drop off the ribosome during protein synthesis, or as a result of ribosome stalling. In terms of biological role, catalyzes the release of premature peptidyl moieties from peptidyl-tRNA molecules trapped in stalled 50S ribosomal subunits, and thus maintains levels of free tRNAs and 50S ribosomes. The chain is Peptidyl-tRNA hydrolase from Haemophilus ducreyi (strain 35000HP / ATCC 700724).